We begin with the raw amino-acid sequence, 332 residues long: Methionine synthase (332 aa).

Positions 211, 213, and 296 each coordinate Zn(2+).

It belongs to the archaeal MetE family. Requires Zn(2+) as cofactor.

It functions in the pathway amino-acid biosynthesis; L-methionine biosynthesis via de novo pathway. Functionally, catalyzes the transfer of a methyl group to L-homocysteine resulting in methionine formation. The physiological methyl donor is unknown. The protein is Methionine synthase of Saccharolobus islandicus (strain Y.G.57.14 / Yellowstone #1) (Sulfolobus islandicus).